The following is a 1033-amino-acid chain: Immunoglobulin superfamily member 2 (1033 aa).

An N-terminal signal peptide occupies residues 1–20 (MACILCVASLFLSLTKFSIG). Over 21-970 (QREVKIQEGP…VSSLICSSGP (950 aa)) the chain is Extracellular. Ig-like C2-type domains follow at residues 22-141 (REVK…TNLT), 144-266 (PDTL…TLIT), 279-388 (PAAR…TQMG), 408-529 (PAAR…QKIS), 539-657 (LRVN…ARVS), 670-797 (PESK…RKTS), and 806-941 (PTGS…KWIN). A disulfide bridge connects residues C43 and C121. An N-linked (GlcNAc...) asparagine glycan is attached at N139. A disulfide bond links C168 and C249. The short motif at 253 to 255 (EWI) is the EWI motif element. 3 disulfides stabilise this stretch: C304–C377, C432–C509, and C560–C638. An N-linked (GlcNAc...) asparagine glycan is attached at N677. Intrachain disulfides connect C695–C776 and C832–C925. A helical membrane pass occupies residues 971-991 (LLHFLIVCPFVMLLLLATSFL). At 992–1033 (CLYRKARKLSQLSLSAKKEKALWVGMRKTSLQKEAGEESGHY) the chain is on the cytoplasmic side.

In terms of processing, N-glycosylated.

It localises to the membrane. Functionally, plays a role as inhibitor of T-cells proliferation induced by CD3. Inhibits expression of IL2RA on activated T-cells and secretion of IL2. Inhibits tyrosine kinases that are required for IL2 production and cellular proliferation. Inhibits phospholipase C-gamma-1/PLCG1 phosphorylation and subsequent CD3-induced changes in intracellular free calcium. Prevents nuclear translocation of nuclear factor of activated T-cell to the nucleus. Plays a role in the inhibition of T-cell proliferation via IL10 secretion by cutaneous dendritic cells. The sequence is that of Immunoglobulin superfamily member 2 (Cd101) from Mus musculus (Mouse).